Consider the following 328-residue polypeptide: uncharacterized protein (328 aa).

Residues L37–I179 form the SIS domain. Residue G52–G57 coordinates ATP. 2 consecutive CBS domains span residues P207 to I264 and M273 to L328.

It belongs to the SIS family. GutQ/KpsF subfamily.

This is an uncharacterized protein from Chlamydia trachomatis serovar D (strain ATCC VR-885 / DSM 19411 / UW-3/Cx).